A 54-amino-acid chain; its full sequence is UPF0391 membrane protein Daro_2080 (54 aa).

The next 2 membrane-spanning stretches (helical) occupy residues 5 to 25 (AIVF…GIAA) and 30 to 50 (IAKI…VMGF).

Belongs to the UPF0391 family.

It is found in the cell membrane. This Dechloromonas aromatica (strain RCB) protein is UPF0391 membrane protein Daro_2080.